The chain runs to 387 residues: 8-amino-7-oxononanoate synthase (387 aa).

Arg19 lines the substrate pocket. 106–107 contacts pyridoxal 5'-phosphate; sequence GY. His131 is a binding site for substrate. The pyridoxal 5'-phosphate site is built by Ser177, His205, and Thr236. Position 239 is an N6-(pyridoxal phosphate)lysine (Lys239). Thr353 is a substrate binding site.

This sequence belongs to the class-II pyridoxal-phosphate-dependent aminotransferase family. BioF subfamily. In terms of assembly, homodimer. Pyridoxal 5'-phosphate serves as cofactor.

It catalyses the reaction 6-carboxyhexanoyl-[ACP] + L-alanine + H(+) = (8S)-8-amino-7-oxononanoate + holo-[ACP] + CO2. It participates in cofactor biosynthesis; biotin biosynthesis. Catalyzes the decarboxylative condensation of pimeloyl-[acyl-carrier protein] and L-alanine to produce 8-amino-7-oxononanoate (AON), [acyl-carrier protein], and carbon dioxide. In Nitrosomonas europaea (strain ATCC 19718 / CIP 103999 / KCTC 2705 / NBRC 14298), this protein is 8-amino-7-oxononanoate synthase.